We begin with the raw amino-acid sequence, 253 residues long: Chemotaxis protein PomA (253 aa).

The next 4 membrane-spanning stretches (helical) occupy residues 6-26 (LLGL…GGSI), 28-48 (MFVD…VVLM), 146-166 (FGDV…VAML), and 180-200 (AVAL…FFPI). Topologically, residues 201 to 253 (ADKLSLRRDQETLNRRLIMDGVLAIQDGQNPRVIDSYLKNYLNEGKRALEIDE) are cytoplasmic.

The protein belongs to the MotA family. As to quaternary structure, each stator complex is composed of 4 PomA and 2 PomB subunits. 2 A subunits and 1 B subunit are thought to form a single ion channel, so that each stator complex contains two channels.

The protein localises to the cell inner membrane. Its function is as follows. PomA and PomB comprise the stator element of the flagellar motor complex. Required for rotation of the flagellar motor. Probable transmembrane proton channel. The protein is Chemotaxis protein PomA (pomA) of Vibrio alginolyticus.